A 345-amino-acid chain; its full sequence is Cytoplasmic envelopment protein 2 (345 aa).

The nuclear localization signal 1 stretch occupies residues 26–35; it reads KLVGKSRKHR. Residues 55–63 form a nuclear export signal region; sequence CILCQLLLL. A nuclear localization signal 2 region spans residues 90 to 94; that stretch reads RRRRR.

The protein belongs to the herpesviridae cytoplasmic envelopment protein 2 family. Interacts with cytoplasmic envelopment protein 3 and with the capsid. Interacts with host STING1; this interaction prevents viral DNA-triggered antiviral immune response.

It localises to the virion tegument. Its subcellular location is the host cytoplasm. The protein localises to the host nucleus. Plays a critical role in cytoplasmic virus egress. Participates in the final step of tegumentation and envelope acquisition within the host cytoplasm by directly interacting with the capsid. Upon virion binding to target cell, a signaling cascade is triggered to disrupt the interaction with the capsid, thereby preparing capsid uncoating. Additionally, antagonizes the viral DNA-triggered antiviral immune response by targeting host STING1 and preventing its dimerization and trafficking. The chain is Cytoplasmic envelopment protein 2 (UL94) from Human cytomegalovirus (strain AD169) (HHV-5).